Here is a 305-residue protein sequence, read N- to C-terminus: Dermonecrotic toxin LiSicTox-alphaIA2aiii (305 aa).

A signal peptide spans 1–17 (LPYIALILVCWSVLSQA). A propeptide spanning residues 18 to 25 (AQTDVEER) is cleaved from the precursor. Histidine 37 is a catalytic residue. Residues glutamate 57 and aspartate 59 each contribute to the Mg(2+) site. Catalysis depends on histidine 73, which acts as the Nucleophile. Intrachain disulfides connect cysteine 77/cysteine 83 and cysteine 79/cysteine 222. Aspartate 117 is a Mg(2+) binding site. Asparagine 282 is a glycosylation site (N-linked (GlcNAc...) asparagine).

It belongs to the arthropod phospholipase D family. Class II subfamily. The cofactor is Mg(2+). In terms of tissue distribution, expressed by the venom gland.

It is found in the secreted. The enzyme catalyses an N-(acyl)-sphingosylphosphocholine = an N-(acyl)-sphingosyl-1,3-cyclic phosphate + choline. It catalyses the reaction an N-(acyl)-sphingosylphosphoethanolamine = an N-(acyl)-sphingosyl-1,3-cyclic phosphate + ethanolamine. It carries out the reaction a 1-acyl-sn-glycero-3-phosphocholine = a 1-acyl-sn-glycero-2,3-cyclic phosphate + choline. The catalysed reaction is a 1-acyl-sn-glycero-3-phosphoethanolamine = a 1-acyl-sn-glycero-2,3-cyclic phosphate + ethanolamine. In terms of biological role, dermonecrotic toxins cleave the phosphodiester linkage between the phosphate and headgroup of certain phospholipids (sphingolipid and lysolipid substrates), forming an alcohol (often choline) and a cyclic phosphate. This toxin acts on sphingomyelin (SM). It may also act on ceramide phosphoethanolamine (CPE), lysophosphatidylcholine (LPC) and lysophosphatidylethanolamine (LPE), but not on lysophosphatidylserine (LPS), and lysophosphatidylglycerol (LPG). It acts by transphosphatidylation, releasing exclusively cyclic phosphate products as second products. Induces dermonecrosis, hemolysis, increased vascular permeability, edema, inflammatory response, and platelet aggregation. The chain is Dermonecrotic toxin LiSicTox-alphaIA2aiii from Loxosceles intermedia (Brown spider).